A 628-amino-acid polypeptide reads, in one-letter code: DNA mismatch repair protein MutL (628 aa).

The interval 332–416 is disordered; the sequence is PTSAMPAPGN…ASTAPPLSEE (85 aa). Residues 375 to 396 show a composition bias toward polar residues; it reads EGSSRSDVPYPSASQVTETTDS.

This sequence belongs to the DNA mismatch repair MutL/HexB family.

Its function is as follows. This protein is involved in the repair of mismatches in DNA. It is required for dam-dependent methyl-directed DNA mismatch repair. May act as a 'molecular matchmaker', a protein that promotes the formation of a stable complex between two or more DNA-binding proteins in an ATP-dependent manner without itself being part of a final effector complex. In Syntrophotalea carbinolica (strain DSM 2380 / NBRC 103641 / GraBd1) (Pelobacter carbinolicus), this protein is DNA mismatch repair protein MutL.